Consider the following 296-residue polypeptide: N-acetylmuramic acid 6-phosphate etherase 2 (296 aa).

An SIS domain is found at 55 to 218; sequence IVANFKAGGR…STASMVGIGK (164 aa). The Proton donor role is filled by glutamate 83. The active site involves glutamate 114.

Belongs to the GCKR-like family. MurNAc-6-P etherase subfamily. As to quaternary structure, homodimer.

It catalyses the reaction N-acetyl-D-muramate 6-phosphate + H2O = N-acetyl-D-glucosamine 6-phosphate + (R)-lactate. The protein operates within amino-sugar metabolism; N-acetylmuramate degradation. Specifically catalyzes the cleavage of the D-lactyl ether substituent of MurNAc 6-phosphate, producing GlcNAc 6-phosphate and D-lactate. In Lactiplantibacillus plantarum (strain ATCC BAA-793 / NCIMB 8826 / WCFS1) (Lactobacillus plantarum), this protein is N-acetylmuramic acid 6-phosphate etherase 2.